A 496-amino-acid polypeptide reads, in one-letter code: Solute carrier family 2, facilitated glucose transporter member 3 (496 aa).

At 1–11 (MADKKKITASL) the chain is on the cytoplasmic side. Residues 12 to 33 (IYAVSVAAIGSLQFGYNTGVIN) traverse the membrane as a helical segment. At 34–65 (APEKIIQAFYNRTLSQRSGETISPELLTSLWS) the chain is on the extracellular side. A glycan (N-linked (GlcNAc...) asparagine) is linked at Asn-44. The chain crosses the membrane as a helical span at residues 66 to 86 (LSVAIFSVGGMIGSFSVSLFF). Residues 87–91 (NRFGR) lie on the Cytoplasmic side of the membrane. Residues 92–112 (RNSMLLVNVLAFAGGALMALS) traverse the membrane as a helical segment. Topologically, residues 113 to 119 (KIAKAVE) are extracellular. The helical transmembrane segment at 120 to 143 (MLIIGRFIIGLFCGLCTGFVPMYI) threads the bilayer. At 144–154 (SEVSPTSLRGA) the chain is on the cytoplasmic side. A helical transmembrane segment spans residues 155–175 (FGTLNQLGIVVGILVAQIFGL). Position 160 (Gln-160) interacts with D-glucose. Topologically, residues 176–184 (EGIMGTEAL) are extracellular. Residues 185 to 205 (WPLLLGFTIVPAVLQCVALLF) traverse the membrane as a helical segment. The Cytoplasmic segment spans residues 206-270 (CPESPRFLLI…LFRSPNYRQP (65 aa)). A helical membrane pass occupies residues 271 to 291 (IIISITLQLSQQLSGINAVFY). Residues 278-280 (QLS) are important for selectivity against fructose. D-glucose-binding positions include 281–282 (QQ) and Asn-287. The Extracellular portion of the chain corresponds to 292 to 305 (YSTGIFERAGITQP). Residues 306–326 (VYATIGAGVVNTVFTVVSLFL) form a helical membrane-spanning segment. Asn-316 lines the D-glucose pocket. At 327-332 (VERAGR) the chain is on the cytoplasmic side. A helical transmembrane segment spans residues 333-353 (RTLHLVGLGGMAVCAAVMTIA). Topologically, residues 354–362 (LALKEKWIR) are extracellular. The helical transmembrane segment at 363-388 (YISIVATFGFVALFEIGPGPIPWFIV) threads the bilayer. Glu-377 and Trp-385 together coordinate D-glucose. The Cytoplasmic segment spans residues 389–398 (AELFSQGPRP). Residues 399 to 419 (AAMAVAGCSNWTSNFLVGMLF) traverse the membrane as a helical segment. Residues 420–428 (PYAEKLCGP) are Extracellular-facing. Residues 429-449 (YVFLIFLVFLLIFFIFTYFKV) form a helical membrane-spanning segment. Over 450–496 (PETKGRTFEDISRGFEEQVETSSPSSPPIEKNPMVEMNSIEPDKEVA) the chain is Cytoplasmic. The interval 464–496 (FEEQVETSSPSSPPIEKNPMVEMNSIEPDKEVA) is disordered.

This sequence belongs to the major facilitator superfamily. Sugar transporter (TC 2.A.1.1) family. Glucose transporter subfamily.

It is found in the cell membrane. It localises to the perikaryon. The protein resides in the cell projection. It carries out the reaction D-glucose(out) = D-glucose(in). The enzyme catalyses D-galactose(in) = D-galactose(out). Its activity is regulated as follows. Deoxyglucose transport is inhibited by D-glucose, D-galactose and maltose. Galactose transport is inhibited by D-glucose and maltose. Facilitative glucose transporter. Can also mediate the uptake of various other monosaccharides across the cell membrane. Mediates the uptake of glucose, 2-deoxyglucose, galactose, mannose, xylose and fucose, and probably also dehydroascorbate. Does not mediate fructose transport. Required for mesendoderm differentiation. The protein is Solute carrier family 2, facilitated glucose transporter member 3 of Gallus gallus (Chicken).